Reading from the N-terminus, the 512-residue chain is Lysine--tRNA ligase (512 aa).

Mg(2+)-binding residues include glutamate 408 and glutamate 415.

It belongs to the class-II aminoacyl-tRNA synthetase family. In terms of assembly, homodimer. Requires Mg(2+) as cofactor.

The protein localises to the cytoplasm. It catalyses the reaction tRNA(Lys) + L-lysine + ATP = L-lysyl-tRNA(Lys) + AMP + diphosphate. The chain is Lysine--tRNA ligase from Prochlorococcus marinus (strain MIT 9515).